Consider the following 562-residue polypeptide: Proton channel OTOP2 (562 aa).

The segment at 1–20 (MSEELAQGPKESPPAPRAGP) is disordered. 12 helical membrane-spanning segments follow: residues 30–50 (LLSV…ISGG), 62–82 (VFAL…FYLL), 100–120 (PIWL…MDVF), 137–157 (ILHP…LWVS), 169–189 (TWCG…AAVV), 241–261 (FYLY…LYVM), 289–309 (FFAG…VFII), 324–344 (ALVI…LVSL), 371–391 (LLMG…VAVV), 402–422 (LNLT…MFII), 495–515 (DISL…AFGA), and 527–547 (FYGY…GIFY).

The protein belongs to the otopetrin family.

It is found in the cell membrane. The catalysed reaction is H(+)(in) = H(+)(out). With respect to regulation, actives at neutral and alkaline extracellular pH, acid extracellular pH appears to inhibit the channel. Insensitive to activation by Zn(2+). Proton-selective ion channel open at neutral pH. Actives at neutral and alkaline extracellular pH, likely participates in some alkali-related physiological activities. This Homo sapiens (Human) protein is Proton channel OTOP2.